Reading from the N-terminus, the 223-residue chain is Sigma non-opioid intracellular receptor 1 (223 aa).

Residues Met-1–Trp-9 lie on the Lumenal side of the membrane. Positions Gln-2–Arg-8 are targeting to endoplasmic reticulum-associated lipid droplets. Residues Val-10 to Leu-30 form a helical membrane-spanning segment. At Gly-31 to Ser-223 the chain is on the cytoplasmic side. The segment at Ser-99–Leu-106 is important for ligand-binding. The interval Val-177–Ser-223 is C-terminal hydrophobic region.

It belongs to the ERG2 family. Homotrimer. Forms a ternary complex with ANK2 and ITPR3. The complex is disrupted by agonists. Interacts with KCNA4. Interacts with KCNA2; cocaine consumption leads to increased interaction. Interacts with RNF112 in an oxidative stress-regulated manner.

The protein resides in the nucleus inner membrane. Its subcellular location is the nucleus outer membrane. It is found in the nucleus envelope. It localises to the cytoplasmic vesicle. The protein localises to the endoplasmic reticulum membrane. The protein resides in the membrane. Its subcellular location is the lipid droplet. It is found in the cell junction. It localises to the cell membrane. The protein localises to the cell projection. The protein resides in the growth cone. Its subcellular location is the postsynaptic density membrane. Functions in lipid transport from the endoplasmic reticulum and is involved in a wide array of cellular functions probably through regulation of the biogenesis of lipid microdomains at the plasma membrane. Involved in the regulation of different receptors it plays a role in BDNF signaling and EGF signaling. Also regulates ion channels like the potassium channel and could modulate neurotransmitter release. Plays a role in calcium signaling through modulation together with ANK2 of the ITP3R-dependent calcium efflux at the endoplasmic reticulum. Plays a role in several other cell functions including proliferation, survival and death. Originally identified for its ability to bind various psychoactive drugs it is involved in learning processes, memory and mood alteration. Necessary for proper mitochondrial axonal transport in motor neurons, in particular the retrograde movement of mitochondria. Plays a role in protecting cells against oxidative stress-induced cell death via its interaction with RNF112. The polypeptide is Sigma non-opioid intracellular receptor 1 (SIGMAR1) (Mustela erminea (Ermine)).